The primary structure comprises 191 residues: Lipid A acyltransferase PagP (191 aa).

Positions 1-23 are cleaved as a signal peptide; the sequence is MRLFYQRISLLISLCGFFSAAWA. Residues histidine 62, aspartate 105, and serine 106 contribute to the active site.

The protein belongs to the lipid A palmitoyltransferase family. As to quaternary structure, homodimer.

The protein localises to the cell outer membrane. The catalysed reaction is a lipid A + a 1,2-diacyl-sn-glycero-3-phosphocholine = a hepta-acyl lipid A + a 2-acyl-sn-glycero-3-phosphocholine. The enzyme catalyses a lipid IVA + a 1,2-diacyl-sn-glycero-3-phosphocholine = a lipid IVB + a 2-acyl-sn-glycero-3-phosphocholine. It catalyses the reaction a lipid IIA + a 1,2-diacyl-sn-glycero-3-phosphocholine = a lipid IIB + a 2-acyl-sn-glycero-3-phosphocholine. Functionally, transfers a fatty acid residue from the sn-1 position of a phospholipid to the N-linked hydroxyfatty acid chain on the proximal unit of lipid A or its precursors. This chain is Lipid A acyltransferase PagP, found in Sodalis glossinidius (strain morsitans).